Consider the following 52-residue polypeptide: uncharacterized protein (52 aa).

This is an uncharacterized protein from Bacillus subtilis (strain 168).